The chain runs to 551 residues: MHDFFLPVIKNALLSLAVSSDKPVLIERPADKKFGDFSTNIAFLIAKESRRNPKEFAGELIAHLSFPPDTIKSMTVAGPGFINFFLTPTFIMQSVEQILLEGKGYGRSCLGKGKKAIVEYVSANPTGPLTIGRGRGGVLGDCIANLLETQSYAVTREYYFNDAGRQMQILGESVRFRYLELCGVAETFPETHYQGAYIREIAESLFAGHGAALQGVHDLLPFIKSAETIIFKSIKNTLERIGIRHDSFFNEHTLYHREGSGQSANEEVIDLLREKQFIGEYDGATWFLTSRIGQEKDKVLIKSSGEPSYRLPDIAYHITKFKRGYDLMVNVFGADHIDEYPDVLEALKILGYDASRIQVAINQFVTTTVDGQSVKMSTRKGNADLLDDLVDDVGPDATRLFFIMRSKDSHLNFDIDLAKKQSKDNPVFYLHYAHARICSLLRMAALENGFDPDGSGHHLLQLLDSEPELRLGLLLLEYPQMITASIRLLEPQKMVDYLHSVAELYHKFYQECPILKAEPDISKARLFLSLATKQVLCNGFRILGISAPESM.

Residues 123 to 133 (ANPTGPLTIGR) carry the 'HIGH' region motif.

This sequence belongs to the class-I aminoacyl-tRNA synthetase family. In terms of assembly, monomer.

It localises to the cytoplasm. It catalyses the reaction tRNA(Arg) + L-arginine + ATP = L-arginyl-tRNA(Arg) + AMP + diphosphate. This Chlorobium phaeobacteroides (strain DSM 266 / SMG 266 / 2430) protein is Arginine--tRNA ligase.